An 89-amino-acid chain; its full sequence is Small ribosomal subunit protein uS15 (89 aa).

It belongs to the universal ribosomal protein uS15 family. Part of the 30S ribosomal subunit. Forms a bridge to the 50S subunit in the 70S ribosome, contacting the 23S rRNA.

Functionally, one of the primary rRNA binding proteins, it binds directly to 16S rRNA where it helps nucleate assembly of the platform of the 30S subunit by binding and bridging several RNA helices of the 16S rRNA. Its function is as follows. Forms an intersubunit bridge (bridge B4) with the 23S rRNA of the 50S subunit in the ribosome. The chain is Small ribosomal subunit protein uS15 from Rhizobium etli (strain CIAT 652).